The chain runs to 597 residues: MKNIRNFSIIAHIDHGKSTLADRFIQYCGGLDLREMSTQVLDSMDIEKERGITIKAQTAALNYKARDGQVYQLNLIDTPGHVDFSYEVSRSLSACEGALLVVDASQGVEAQTVANCYTAIDLGVEVVPVLNKIDLPAADPERVEQEIEDIIGIDAVGAVQCSAKSGIGVEDVLEEIVAKIPAPTGDENAPLQAVIVDSWFDNYVGVVMLIRVKNGTIKLKDKVRFMSTKAETQVEQLGVFTPKSVQKQELKAGEVGFLITGVKELGQAKVGDTVTLVANPATEPLPGFQEVQSQVFAGLYPVESHDYEALRDALEKLQLNDASLKFEPEVSQALGFGFRCGFLGLLHLEIVQERLEREFDMDLITTAPTVVYEVVLKSGEKIEVENPSKLPDIGSIETILEPIITATILVPQEYVGNVMTLCNQKRGVQVNMQYMGRQVMLTYDLPMNEVVMDFFDKLKSTSRGYASLDYHFKEFQPSDLIKLDIMVNGEKVDALSLIVHRQSAVHKGRELASKMRELIPRQMFDIAVQAAIGSRIIARENVKALRKNVLAKCYGGDITRKKKLLEKQKAGKRRMKQVGNVEIPQSAFLAILQVSDK.

Residues 2–184 form the tr-type G domain; that stretch reads KNIRNFSIIA…EIVAKIPAPT (183 aa). Residues 14–19 and 131–134 each bind GTP; these read DHGKST and NKID.

Belongs to the TRAFAC class translation factor GTPase superfamily. Classic translation factor GTPase family. LepA subfamily.

Its subcellular location is the cell inner membrane. It carries out the reaction GTP + H2O = GDP + phosphate + H(+). Its function is as follows. Required for accurate and efficient protein synthesis under certain stress conditions. May act as a fidelity factor of the translation reaction, by catalyzing a one-codon backward translocation of tRNAs on improperly translocated ribosomes. Back-translocation proceeds from a post-translocation (POST) complex to a pre-translocation (PRE) complex, thus giving elongation factor G a second chance to translocate the tRNAs correctly. Binds to ribosomes in a GTP-dependent manner. The polypeptide is Elongation factor 4 (Neisseria gonorrhoeae (strain ATCC 700825 / FA 1090)).